A 599-amino-acid chain; its full sequence is Aspartate--tRNA(Asp/Asn) ligase (599 aa).

An L-aspartate-binding site is contributed by Glu173. An aspartate region spans residues 197–200; that stretch reads QLFK. Arg219 serves as a coordination point for L-aspartate. Residues 219–221 and Gln228 each bind ATP; that span reads RDE. An L-aspartate-binding site is contributed by His449. Glu482 contacts ATP. Residue Arg489 coordinates L-aspartate. 534–537 serves as a coordination point for ATP; sequence GLDR.

This sequence belongs to the class-II aminoacyl-tRNA synthetase family. Type 1 subfamily. In terms of assembly, homodimer.

The protein localises to the cytoplasm. It carries out the reaction tRNA(Asx) + L-aspartate + ATP = L-aspartyl-tRNA(Asx) + AMP + diphosphate. In terms of biological role, aspartyl-tRNA synthetase with relaxed tRNA specificity since it is able to aspartylate not only its cognate tRNA(Asp) but also tRNA(Asn). Reaction proceeds in two steps: L-aspartate is first activated by ATP to form Asp-AMP and then transferred to the acceptor end of tRNA(Asp/Asn). The protein is Aspartate--tRNA(Asp/Asn) ligase of Marinobacter nauticus (strain ATCC 700491 / DSM 11845 / VT8) (Marinobacter aquaeolei).